The chain runs to 156 residues: ATP synthase subunit b (156 aa).

The helical transmembrane segment at 12–32 (IAFAIFVWFCVKYVWPPITAA) threads the bilayer.

The protein belongs to the ATPase B chain family. In terms of assembly, F-type ATPases have 2 components, F(1) - the catalytic core - and F(0) - the membrane proton channel. F(1) has five subunits: alpha(3), beta(3), gamma(1), delta(1), epsilon(1). F(0) has three main subunits: a(1), b(2) and c(10-14). The alpha and beta chains form an alternating ring which encloses part of the gamma chain. F(1) is attached to F(0) by a central stalk formed by the gamma and epsilon chains, while a peripheral stalk is formed by the delta and b chains.

The protein localises to the cell inner membrane. In terms of biological role, f(1)F(0) ATP synthase produces ATP from ADP in the presence of a proton or sodium gradient. F-type ATPases consist of two structural domains, F(1) containing the extramembraneous catalytic core and F(0) containing the membrane proton channel, linked together by a central stalk and a peripheral stalk. During catalysis, ATP synthesis in the catalytic domain of F(1) is coupled via a rotary mechanism of the central stalk subunits to proton translocation. Functionally, component of the F(0) channel, it forms part of the peripheral stalk, linking F(1) to F(0). This chain is ATP synthase subunit b, found in Marinobacter nauticus (strain ATCC 700491 / DSM 11845 / VT8) (Marinobacter aquaeolei).